Consider the following 447-residue polypeptide: MSQNHTILQSLPVGQKVGIAFSGGLDTSAALLWMKLKGALPYAYTANLGQPDEDDYNAIPKKAMEYGAENARLIDCRAQLAHEGIAAIQCGAFHVSTGGIAYFNTTPLGRAVTGTMLVSAMKEDDVNIWGDGSTYKGNDIERFYRYGLLTNPALKIYKPWLDQQFIDELGGRHEMSEFLIANGFNYKMSVEKAYSTDSNMLGATHEAKDLEFLNSGIKIVKPIMGVAFWDENVEVSPEEVSVRFEEGVPVALNGKEYADPVELFLEANRIGGRHGLGMSDQIENRIIEAKSRGIYEAPGMALFHIAYERLVTGIHNEDTIEQYRINGLRLGRLLYQGRWFDSQALMLRETAQRWVAKAVTGEVTLELRRGNDYSILNTESPNLTYQPERLSMEKVEDAAFTPLDRIGQLTMRNLDITDTRVKLGIYSQSGLLSLGEGSVLPQLGNKQ.

ATP contacts are provided by residues 20-28 (AFSGGLDTS) and alanine 46. Tyrosine 102 provides a ligand contact to L-citrulline. Residues glycine 132 and threonine 134 each coordinate ATP. Positions 134, 138, and 139 each coordinate L-aspartate. L-citrulline is bound at residue asparagine 138. Residue aspartate 139 participates in ATP binding. Arginine 142 and serine 195 together coordinate L-citrulline. An ATP-binding site is contributed by aspartate 197. Positions 204, 206, and 283 each coordinate L-citrulline.

This sequence belongs to the argininosuccinate synthase family. Type 2 subfamily. As to quaternary structure, homotetramer.

It localises to the cytoplasm. It carries out the reaction L-citrulline + L-aspartate + ATP = 2-(N(omega)-L-arginino)succinate + AMP + diphosphate + H(+). Its pathway is amino-acid biosynthesis; L-arginine biosynthesis; L-arginine from L-ornithine and carbamoyl phosphate: step 2/3. The chain is Argininosuccinate synthase (argG) from Neisseria meningitidis serogroup B (strain ATCC BAA-335 / MC58).